Here is a 423-residue protein sequence, read N- to C-terminus: Putative galacturan 1,4-alpha-galacturonidase C (423 aa).

An N-terminal signal peptide occupies residues 1-20 (MQLRASVLLSFLGLASVGHA). 6 N-linked (GlcNAc...) asparagine glycosylation sites follow: asparagine 92, asparagine 98, asparagine 118, asparagine 156, asparagine 179, and asparagine 191. PbH1 repeat units lie at residues 215–236 (ATNI…AIKP) and 238–258 (SYNI…AIGS). Aspartate 229 (proton donor) is an active-site residue. An intrachain disulfide couples cysteine 231 to cysteine 248. Asparagine 245, asparagine 344, and asparagine 362 each carry an N-linked (GlcNAc...) asparagine glycan. Residues cysteine 379 and cysteine 385 are joined by a disulfide bond. Asparagine 400 carries N-linked (GlcNAc...) asparagine glycosylation.

This sequence belongs to the glycosyl hydrolase 28 family.

Its subcellular location is the secreted. The enzyme catalyses [(1-&gt;4)-alpha-D-galacturonosyl](n) + H2O = alpha-D-galacturonate + [(1-&gt;4)-alpha-D-galacturonosyl](n-1). In terms of biological role, specific in hydrolyzing the terminal glycosidic bond of polygalacturonic acid and oligogalacturonates. The polypeptide is Putative galacturan 1,4-alpha-galacturonidase C (rgxC) (Aspergillus niger (strain ATCC MYA-4892 / CBS 513.88 / FGSC A1513)).